The chain runs to 101 residues: Small ribosomal subunit protein uS14A (101 aa).

Positions 47-66 (ALASLPRDSNPNRVTNRCAL) are disordered.

Belongs to the universal ribosomal protein uS14 family. In terms of assembly, part of the 30S ribosomal subunit. Contacts proteins S3 and S10.

Binds 16S rRNA, required for the assembly of 30S particles and may also be responsible for determining the conformation of the 16S rRNA at the A site. The chain is Small ribosomal subunit protein uS14A from Myxococcus xanthus (strain DK1622).